A 990-amino-acid polypeptide reads, in one-letter code: Glycine dehydrogenase (decarboxylating) (990 aa).

Lysine 726 bears the N6-(pyridoxal phosphate)lysine mark.

The protein belongs to the GcvP family. The glycine cleavage system is composed of four proteins: P, T, L and H. The cofactor is pyridoxal 5'-phosphate.

The catalysed reaction is N(6)-[(R)-lipoyl]-L-lysyl-[glycine-cleavage complex H protein] + glycine + H(+) = N(6)-[(R)-S(8)-aminomethyldihydrolipoyl]-L-lysyl-[glycine-cleavage complex H protein] + CO2. In terms of biological role, the glycine cleavage system catalyzes the degradation of glycine. The P protein binds the alpha-amino group of glycine through its pyridoxal phosphate cofactor; CO(2) is released and the remaining methylamine moiety is then transferred to the lipoamide cofactor of the H protein. In Rhodopseudomonas palustris (strain ATCC BAA-98 / CGA009), this protein is Glycine dehydrogenase (decarboxylating).